Here is a 272-residue protein sequence, read N- to C-terminus: Acetylglutamate kinase (272 aa).

Residues 46–47 (GA), Arg68, and Asn166 contribute to the substrate site.

This sequence belongs to the acetylglutamate kinase family. ArgB subfamily.

The protein resides in the cytoplasm. The enzyme catalyses N-acetyl-L-glutamate + ATP = N-acetyl-L-glutamyl 5-phosphate + ADP. The protein operates within amino-acid biosynthesis; L-arginine biosynthesis; N(2)-acetyl-L-ornithine from L-glutamate: step 2/4. In terms of biological role, catalyzes the ATP-dependent phosphorylation of N-acetyl-L-glutamate. The sequence is that of Acetylglutamate kinase from Dehalococcoides mccartyi (strain ATCC BAA-2266 / KCTC 15142 / 195) (Dehalococcoides ethenogenes (strain 195)).